A 565-amino-acid polypeptide reads, in one-letter code: METTTKKARSLYIPYAGPVLLEFPLLNKGSAFSVEERRNFNLSGLLPEVVESIEEQAERAWLQYQGFKTEIDKHIYLRNIQDTNETLFYRLVQNHLEEMMPVIYTPTVGAACERFSEIYRRARGVFISYPNRHNMDDILQNVPNHNIKVIVVTDGERILGLGDQGIGGMGIPIGKLSLYTACGGISPAYTLPVVLDVGTNNQQLLNDPLYMGWRHPRITDDEYYAFVDEFIQAVKQRWPDILLQFEDFAQKNAMPLLTRYRDEICSFNDDIQGTAAVTVGTLIAASRAAGSQLSEQKIVFLGAGSAGCGIAEQIIAQTQREGLSEDAARQNVFMVDRFGLLTDRMPNLLPFQAKLVQKCDNLQHWDTENDVLSLLDVVRNVKPDILIGVSGQTGLFTEEIIREMHKHCPRPIVMPLSNPTSRVEATPQDIIAWTEGNALVATGSPFSPVIWKDKVYPIAQCNNAYIFPGIGLGVIASGASRITDEMLMSASETLAKHSPLVNNGEGLVLPALKDIQVVSRAIAFAVGKMAQQQGVAVKTSAEALQQAIDDNFWKPEYRDYRRTSI.

Y104 functions as the Proton donor in the catalytic mechanism. R157 contributes to the NAD(+) binding site. K175 acts as the Proton acceptor in catalysis. A divalent metal cation contacts are provided by E246, D247, and D270. Residues D270 and N418 each contribute to the NAD(+) site.

It belongs to the malic enzymes family. In terms of assembly, homotetramer. The cofactor is Mg(2+). Mn(2+) is required as a cofactor.

It carries out the reaction (S)-malate + NAD(+) = pyruvate + CO2 + NADH. It catalyses the reaction oxaloacetate + H(+) = pyruvate + CO2. In Salmonella heidelberg (strain SL476), this protein is NAD-dependent malic enzyme.